The primary structure comprises 371 residues: Glycosyltransferase 8 domain-containing protein 1 (371 aa).

Over 1 to 7 (MSFRKVH) the chain is Cytoplasmic. Residues 8-28 (IAIILLAAVVFLLILHHNILG) form a helical; Signal-anchor for type II membrane protein membrane-spanning segment. At 29–371 (LTDILTRQSS…RRHGEADGTK (343 aa)) the chain is on the lumenal side. Residues Asn-104, Asn-249, and Asn-257 are each glycosylated (N-linked (GlcNAc...) asparagine).

It belongs to the glycosyltransferase 8 family.

It is found in the membrane. The chain is Glycosyltransferase 8 domain-containing protein 1 (glt8d1) from Xenopus tropicalis (Western clawed frog).